The following is a 211-amino-acid chain: Probable nicotinate-nucleotide adenylyltransferase (211 aa).

Belongs to the NadD family.

The catalysed reaction is nicotinate beta-D-ribonucleotide + ATP + H(+) = deamido-NAD(+) + diphosphate. Its pathway is cofactor biosynthesis; NAD(+) biosynthesis; deamido-NAD(+) from nicotinate D-ribonucleotide: step 1/1. Its function is as follows. Catalyzes the reversible adenylation of nicotinate mononucleotide (NaMN) to nicotinic acid adenine dinucleotide (NaAD). This Thermoanaerobacter sp. (strain X514) protein is Probable nicotinate-nucleotide adenylyltransferase.